Consider the following 419-residue polypeptide: Tyrosine--tRNA ligase (419 aa).

Tyr-34 is a binding site for L-tyrosine. A 'HIGH' region motif is present at residues 39–48 (PTADSLHLGH). Residues Tyr-169 and Gln-173 each coordinate L-tyrosine. The 'KMSKS' region motif lies at 229–233 (KFGKS). Position 232 (Lys-232) interacts with ATP. Residues 352–419 (LNIIDLLVTS…KKKYFVLNFK (68 aa)) form the S4 RNA-binding domain.

This sequence belongs to the class-I aminoacyl-tRNA synthetase family. TyrS type 1 subfamily. As to quaternary structure, homodimer.

Its subcellular location is the cytoplasm. The enzyme catalyses tRNA(Tyr) + L-tyrosine + ATP = L-tyrosyl-tRNA(Tyr) + AMP + diphosphate + H(+). Functionally, catalyzes the attachment of tyrosine to tRNA(Tyr) in a two-step reaction: tyrosine is first activated by ATP to form Tyr-AMP and then transferred to the acceptor end of tRNA(Tyr). This Streptococcus agalactiae serotype V (strain ATCC BAA-611 / 2603 V/R) protein is Tyrosine--tRNA ligase.